We begin with the raw amino-acid sequence, 340 residues long: Acidic endochitinase WIN6 (340 aa).

Residues 1-22 (MSVWALFAFFSLFLSLSVRGSA) form the signal peptide. The region spanning 23-63 (EQCGRQAGDALCPGGLCCSSYGWCGTTVDYCGIGCQSQCDG) is the Chitin-binding type-1 domain. 4 disulfide bridges follow: Cys-25-Cys-40, Cys-34-Cys-46, Cys-39-Cys-53, and Cys-57-Cys-61. Residues 64–85 (GGGGDGGDDGCDGGDDGGGDGD) form a spacer region. Positions 86-340 (DGYLSDIIPK…YGLSGLKDTM (255 aa)) are chitinase. 3 cysteine pairs are disulfide-bonded: Cys-110/Cys-172, Cys-183/Cys-191, and Cys-290/Cys-323. Glu-154 functions as the Proton donor in the catalytic mechanism.

The protein belongs to the glycosyl hydrolase 19 family. Chitinase class I subfamily.

It carries out the reaction Random endo-hydrolysis of N-acetyl-beta-D-glucosaminide (1-&gt;4)-beta-linkages in chitin and chitodextrins.. Its function is as follows. Defense against chitin-containing fungal pathogens. This is Acidic endochitinase WIN6 (WIN6) from Populus trichocarpa (Western balsam poplar).